The chain runs to 149 residues: VapC ribonuclease PF0355 (149 aa).

Residues Thr8–Pro122 form the PINc domain. 2 residues coordinate Mg(2+): Asp10 and Asp98.

The protein belongs to the PINc/VapC protein family. The cofactor is Mg(2+).

Its function is as follows. Toxic component of a type II toxin-antitoxin (TA) system. An RNase. The polypeptide is VapC ribonuclease PF0355 (Pyrococcus furiosus (strain ATCC 43587 / DSM 3638 / JCM 8422 / Vc1)).